The chain runs to 151 residues: UPF0208 membrane protein YE1335 (151 aa).

Helical transmembrane passes span 46 to 66 (FGIR…IALG) and 69 to 89 (LGPA…GLWW).

It belongs to the UPF0208 family.

Its subcellular location is the cell inner membrane. This Yersinia enterocolitica serotype O:8 / biotype 1B (strain NCTC 13174 / 8081) protein is UPF0208 membrane protein YE1335.